Reading from the N-terminus, the 304-residue chain is MEESSAAKIQLLKEFKFEKILKDDTKSKIITLYGKIRNEVALLLLEKTAFDLNTIKLDQLATFLQDTKLVENNDVFHWFLSTNFQDCSTLPSVKSTLIWPASETHVRKYSSQKKRMVCETPEMYLKVTKPFIETQRGPQIQWVENILTHKAEAERIVVEDPDPLNGFIVIPDLKWDRQTMSALNLMAIVHATDIASIRDLKYKHIPLLENIRNKVLTEVPKQFSVDKNQLKMFVHYLPSYYHLHVHILHVDHETGDGSAVGRAILLDDVIDRLRNSPDGLENVNITFNIGEQHFLFQPLTNMNA.

Residues Glu152, Lys174, and 235–246 (HYLPSYYHLHVH) each bind substrate. The Histidine triad motif signature appears at 242 to 246 (HLHVH). Residue His244 is the Nucleophile of the active site.

Belongs to the HIT family.

It localises to the cytoplasm. The protein localises to the nucleus. It carries out the reaction a 5'-end (N(7)-methyl 5'-triphosphoguanosine)-ribonucleoside in mRNA + H2O = N(7)-methyl-GMP + a 5'-end diphospho-ribonucleoside in mRNA + 2 H(+). Its function is as follows. Decapping scavenger enzyme that catalyzes the cleavage of a residual cap structure following the degradation of mRNAs by the 3'-&gt;5' exosome-mediated mRNA decay pathway. Hydrolyzes cap analog structures like 7-methylguanosine nucleoside triphosphate (m7GpppG) with up to 10 nucleotide substrates (small capped oligoribonucleotides) and specifically releases 5'-phosphorylated RNA fragments and 7-methylguanosine monophosphate (m7GMP). Has no activity towards mRNA molecules longer than 25 nucleotides. May also play a role in the 5'-&gt;3 mRNA decay pathway; m7GDP, the downstream product released by the 5'-&gt;3' mRNA mediated decapping activity, may be also converted by DCS1 to m7GMP. Inhibits mRNA translation. Binds to the m7GpppG cap analog. This is m7GpppX diphosphatase (nhm1) from Schizosaccharomyces pombe (strain 972 / ATCC 24843) (Fission yeast).